The sequence spans 274 residues: Anamorsin homolog (274 aa).

Residues 1–154 are N-terminal SAM-like domain; sequence MDRTRKQCSV…KKPSWKIGSS (154 aa). Residues 154 to 185 form a linker region; sequence SFALKKSTKGSVKVNLDDDLIDEDSLLTEEDM. Residues Cys-196, Cys-205, Cys-208, and Cys-210 each contribute to the [2Fe-2S] cluster site. Positions 196–210 are fe-S binding site A; the sequence is CEVGSTRKACKNCTC. Residues Cys-235, Cys-238, Cys-246, and Cys-249 each coordinate [4Fe-4S] cluster. 2 short sequence motifs (cx2C motif) span residues 235–238 and 246–249; these read CGSC and CSTC. The segment at 235–249 is fe-S binding site B; that stretch reads CGSCGLGDAFRCSTC.

It belongs to the anamorsin family. As to quaternary structure, monomer. [2Fe-2S] cluster is required as a cofactor. Requires [4Fe-4S] cluster as cofactor.

Its subcellular location is the cytoplasm. The protein localises to the mitochondrion intermembrane space. Component of the cytosolic iron-sulfur (Fe-S) protein assembly (CIA) machinery. Required for the maturation of extramitochondrial Fe-S proteins. Part of an electron transfer chain functioning in an early step of cytosolic Fe-S biogenesis, facilitating the de novo assembly of a [4Fe-4S] cluster on the cytosolic Fe-S scaffold complex. Electrons are transferred from NADPH via a FAD- and FMN-containing diflavin oxidoreductase. Together with the diflavin oxidoreductase, also required for the assembly of the diferric tyrosyl radical cofactor of ribonucleotide reductase (RNR), probably by providing electrons for reduction during radical cofactor maturation in the catalytic small subunit. The chain is Anamorsin homolog from Ricinus communis (Castor bean).